The primary structure comprises 132 residues: Small ribosomal subunit protein uS8 (132 aa).

It belongs to the universal ribosomal protein uS8 family. Part of the 30S ribosomal subunit. Contacts proteins S5 and S12.

Its function is as follows. One of the primary rRNA binding proteins, it binds directly to 16S rRNA central domain where it helps coordinate assembly of the platform of the 30S subunit. This chain is Small ribosomal subunit protein uS8, found in Lacticaseibacillus casei (strain BL23) (Lactobacillus casei).